We begin with the raw amino-acid sequence, 606 residues long: 4-hydroxy-3-methylbut-2-en-1-yl diphosphate synthase (flavodoxin) (606 aa).

C513, C516, C547, and E554 together coordinate [4Fe-4S] cluster.

This sequence belongs to the IspG family. [4Fe-4S] cluster serves as cofactor.

The enzyme catalyses (2E)-4-hydroxy-3-methylbut-2-enyl diphosphate + oxidized [flavodoxin] + H2O + 2 H(+) = 2-C-methyl-D-erythritol 2,4-cyclic diphosphate + reduced [flavodoxin]. Its pathway is isoprenoid biosynthesis; isopentenyl diphosphate biosynthesis via DXP pathway; isopentenyl diphosphate from 1-deoxy-D-xylulose 5-phosphate: step 5/6. Its function is as follows. Converts 2C-methyl-D-erythritol 2,4-cyclodiphosphate (ME-2,4cPP) into 1-hydroxy-2-methyl-2-(E)-butenyl 4-diphosphate. The chain is 4-hydroxy-3-methylbut-2-en-1-yl diphosphate synthase (flavodoxin) from Chlamydia caviae (strain ATCC VR-813 / DSM 19441 / 03DC25 / GPIC) (Chlamydophila caviae).